A 507-amino-acid chain; its full sequence is RNA-splicing ligase RtcB homolog (507 aa).

Residues aspartate 121, cysteine 124, histidine 229, histidine 261, and histidine 355 each contribute to the Mn(2+) site. Residue 228-232 (NHYAE) participates in GMP binding. Residues 355 to 356 (HN), 404 to 407 (GGTM), serine 411, 430 to 433 (HGAG), and lysine 506 contribute to the GMP site. Histidine 430 serves as the catalytic GMP-histidine intermediate.

It belongs to the RtcB family. In terms of assembly, catalytic component of the tRNA-splicing ligase complex. Mn(2+) is required as a cofactor.

It carries out the reaction a 3'-end 3'-phospho-ribonucleotide-RNA + a 5'-end dephospho-ribonucleoside-RNA + GTP = a ribonucleotidyl-ribonucleotide-RNA + GMP + diphosphate. The catalysed reaction is a 3'-end 2',3'-cyclophospho-ribonucleotide-RNA + a 5'-end dephospho-ribonucleoside-RNA + GTP + H2O = a ribonucleotidyl-ribonucleotide-RNA + GMP + diphosphate + H(+). Functionally, catalytic subunit of the tRNA-splicing ligase complex that acts by directly joining spliced tRNA halves to mature-sized tRNAs by incorporating the precursor-derived splice junction phosphate into the mature tRNA as a canonical 3',5'-phosphodiester. May act as an RNA ligase with broad substrate specificity, and may function toward other RNAs. This chain is RNA-splicing ligase RtcB homolog, found in Plasmodium yoelii yoelii.